An 868-amino-acid chain; its full sequence is MSILSILKKDTNIDMQENNINDLVASASRVIAPLWPISTFAAHHPWMGLEKQSFEQVADWLKEIRNVDIYPSAAMIHSAKAKGEIEESFLQSGLSRWLDSQSFHIPRKKVEQFCQVALKLEELPSSLLSLPEVNKLAEEMSYINTESMKDSSLQPVSSLIENQKGENLSDILNYHIIKWCKLYLDDSGSSWTMPNREKGFYRAWQHLIKFDPALSKNERKVLKDWPQDAQVALARALSELGISESNIQAYLEGHLLSLPGWAGMIRWRSQQSIQEQELLIEYLAVRISMELAITKPYLPLKNQKVEKKVAIVPLIASWIYWGNISTREWLQMPAAEQSELLVFAYRFDENIRRKLWLEAWEQTHAEQLRKKIASKQRATNDKKRVLAQLAFCIDVRSEPFRRHLEKLGPFETFGIAGFFGLPIATSELGSNNNHPSLPVILKPKHQIKELTNENELKSYEQRKRVGSSVRYTFKTMKQNVLTSMALPELSGPLFGLQMVTRSFVPRGVGAFIRNLRKTMLQKPDTTFSLNHVHDTKGEIPIGFTKEEKVNYVRQALKMVGLTEKFAPLVVMCGHSSQSTNNPYAAALECGACGGAAGGFNARVFATLCNLPEVREALAAEGIKIPEDTIFAAAEHKTTVDELEWIYVPELSEAAQEAFDCIESIMPNVSQHANRERLTQLPNFKTKIKNASKEAHRFAEDWSEIRPEWGLARNASFIIGQRELTQDCDLEGRAFLHNYDWKQDESGDILANIIAGPGTVAQWINLQYYASTVAPHYYGSGNKTTQTVTAGLGVMQGNASDLLPGLPWQSVMQSDSETYHSPLRLLIVIQAPIEYIERLLNNDFTFREKVQNGWVRLASVDPEGRWKNW.

C392, D394, H574, and C589 together coordinate Zn(2+).

This sequence belongs to the inorganic carbon transporter (TC 9.A.2) DabA family. As to quaternary structure, forms a complex with DabB. Zn(2+) serves as cofactor.

It localises to the cell membrane. Functionally, part of an energy-coupled inorganic carbon pump. The protein is Probable inorganic carbon transporter subunit DabA of Bacillus cereus (strain G9842).